A 286-amino-acid chain; its full sequence is Phosphatidylglycerol--prolipoprotein diacylglyceryl transferase (286 aa).

Helical transmembrane passes span 24-44 (IGPLAVHWYGVGYIVGILFAW), 72-92 (FIVWAAIGVVLGGRTGYVLFY), 104-124 (IFAVWQGGMSFHGGLLGVILA), 140-160 (FDVVAAGVPVGLGLVRVANFI), 190-210 (LYEALLEGLVLFVVLRILTHS), 218-238 (RFVGGAFICGYGLSRIFVEFF), and 253-273 (WLTMGMILSTPMVLAGIWAMA). Arginine 155 serves as a coordination point for a 1,2-diacyl-sn-glycero-3-phospho-(1'-sn-glycerol).

This sequence belongs to the Lgt family.

It is found in the cell inner membrane. It catalyses the reaction L-cysteinyl-[prolipoprotein] + a 1,2-diacyl-sn-glycero-3-phospho-(1'-sn-glycerol) = an S-1,2-diacyl-sn-glyceryl-L-cysteinyl-[prolipoprotein] + sn-glycerol 1-phosphate + H(+). It functions in the pathway protein modification; lipoprotein biosynthesis (diacylglyceryl transfer). In terms of biological role, catalyzes the transfer of the diacylglyceryl group from phosphatidylglycerol to the sulfhydryl group of the N-terminal cysteine of a prolipoprotein, the first step in the formation of mature lipoproteins. The chain is Phosphatidylglycerol--prolipoprotein diacylglyceryl transferase from Mesorhizobium japonicum (strain LMG 29417 / CECT 9101 / MAFF 303099) (Mesorhizobium loti (strain MAFF 303099)).